The following is a 342-amino-acid chain: MKRKWNLEDTKKLFSKPFFDLIFEAQKKHREYFNPNRIQISTLLSIKTGACPEDCKYCPQSSRYKTGLKKEPLLEIEQILKAAKKAKSSGSTRFCMGAAWKNPKEKDMPYLEKIVKEVKKMGMETCMTLGTLNNSQAKKLAKAGLDFYNHNLDTSSNFYSSIITTRTYEERLSTLKKVRNSGMKICSGGIIGLGEKKQDRMELLMELSNLSIQPESVPINMLVKIPGTPMEKNENVDPFEFIRVIAATRIMMPKSYIRLSAGRENMSDETQAMCFMAGANSIFYGCKLLTSSNPKEEKDQKLFEKLDLFPDYKIQSITEENKNNENLKISDVNKAQYYNAAI.

Positions Asn-36–Ser-260 constitute a Radical SAM core domain. Residues Cys-51, Cys-55, and Cys-58 each coordinate [4Fe-4S] cluster. 4 residues coordinate [2Fe-2S] cluster: Cys-95, Cys-126, Cys-186, and Arg-258.

It belongs to the radical SAM superfamily. Biotin synthase family. In terms of assembly, homodimer. It depends on [4Fe-4S] cluster as a cofactor. [2Fe-2S] cluster is required as a cofactor.

The enzyme catalyses (4R,5S)-dethiobiotin + (sulfur carrier)-SH + 2 reduced [2Fe-2S]-[ferredoxin] + 2 S-adenosyl-L-methionine = (sulfur carrier)-H + biotin + 2 5'-deoxyadenosine + 2 L-methionine + 2 oxidized [2Fe-2S]-[ferredoxin]. It participates in cofactor biosynthesis; biotin biosynthesis; biotin from 7,8-diaminononanoate: step 2/2. In terms of biological role, catalyzes the conversion of dethiobiotin (DTB) to biotin by the insertion of a sulfur atom into dethiobiotin via a radical-based mechanism. This chain is Biotin synthase, found in Buchnera aphidicola subsp. Schizaphis graminum (strain Sg).